The sequence spans 101 residues: NADH-ubiquinone oxidoreductase chain 5 (101 aa).

Transmembrane regions (helical) follow at residues 12 to 32, 48 to 68, and 79 to 99; these read IALF…SGVI, FLFI…FICF, and LVIY…LFII.

It belongs to the complex I subunit 5 family.

Its subcellular location is the mitochondrion inner membrane. The enzyme catalyses a ubiquinone + NADH + 5 H(+)(in) = a ubiquinol + NAD(+) + 4 H(+)(out). Functionally, core subunit of the mitochondrial membrane respiratory chain NADH dehydrogenase (Complex I) that is believed to belong to the minimal assembly required for catalysis. Complex I functions in the transfer of electrons from NADH to the respiratory chain. The immediate electron acceptor for the enzyme is believed to be ubiquinone. The protein is NADH-ubiquinone oxidoreductase chain 5 (ND5) of Leishmania tarentolae (Sauroleishmania tarentolae).